The primary structure comprises 434 residues: A-adding tRNA nucleotidyltransferase (434 aa).

20-23 (GAVR) contributes to the ATP binding site. Mg(2+)-binding residues include aspartate 33 and aspartate 35. ATP-binding positions include 91 to 92 (RD), asparagine 96, 132 to 141 (DPLRAWRAAR), and arginine 177. Positions 227-339 (VFEHGVEALH…ELLPDLLSLM (113 aa)) constitute an HD domain.

It belongs to the tRNA nucleotidyltransferase/poly(A) polymerase family. Mg(2+) serves as cofactor.

It catalyses the reaction a tRNA with a 3' CC end + ATP = a tRNA with a 3' CCA end + diphosphate. TRNA nucleotidyltransferase involved in the synthesis of the tRNA CCA terminus. Adds the terminal adenosine residue to tRNA. This Deinococcus radiodurans (strain ATCC 13939 / DSM 20539 / JCM 16871 / CCUG 27074 / LMG 4051 / NBRC 15346 / NCIMB 9279 / VKM B-1422 / R1) protein is A-adding tRNA nucleotidyltransferase.